A 512-amino-acid chain; its full sequence is Histidine ammonia-lyase (512 aa).

The 5-imidazolinone (Ala-Gly) cross-link spans 142–144; the sequence is ASG. Ser-143 carries the post-translational modification 2,3-didehydroalanine (Ser).

Belongs to the PAL/histidase family. Post-translationally, contains an active site 4-methylidene-imidazol-5-one (MIO), which is formed autocatalytically by cyclization and dehydration of residues Ala-Ser-Gly.

It localises to the cytoplasm. It catalyses the reaction L-histidine = trans-urocanate + NH4(+). The protein operates within amino-acid degradation; L-histidine degradation into L-glutamate; N-formimidoyl-L-glutamate from L-histidine: step 1/3. The protein is Histidine ammonia-lyase of Allorhizobium ampelinum (strain ATCC BAA-846 / DSM 112012 / S4) (Agrobacterium vitis (strain S4)).